Here is a 660-residue protein sequence, read N- to C-terminus: Bifunctional polymyxin resistance protein ArnA (660 aa).

Residues 1–304 (MKAVIFAYHD…TLGLVAGARL (304 aa)) are formyltransferase ArnAFT. Histidine 104 serves as the catalytic Proton donor; for formyltransferase activity. (6R)-10-formyltetrahydrofolate contacts are provided by residues arginine 114 and 136 to 140 (VKRAD). Residues 314-660 (RRIRVLILGV…RSVDVAERAS (347 aa)) are dehydrogenase ArnADH. NAD(+)-binding positions include aspartate 347 and 368-369 (DI). UDP-alpha-D-glucuronate contacts are provided by residues alanine 393, tyrosine 398, and 432 to 433 (TS). Glutamate 434 (proton acceptor; for decarboxylase activity) is an active-site residue. Residues arginine 460, asparagine 492, 526 to 535 (KLIDGGQQKR), and tyrosine 613 contribute to the UDP-alpha-D-glucuronate site. Arginine 619 functions as the Proton donor; for decarboxylase activity in the catalytic mechanism.

This sequence in the N-terminal section; belongs to the Fmt family. UDP-L-Ara4N formyltransferase subfamily. The protein in the C-terminal section; belongs to the NAD(P)-dependent epimerase/dehydratase family. UDP-glucuronic acid decarboxylase subfamily. Homohexamer, formed by a dimer of trimers.

The enzyme catalyses UDP-alpha-D-glucuronate + NAD(+) = UDP-beta-L-threo-pentopyranos-4-ulose + CO2 + NADH. The catalysed reaction is UDP-4-amino-4-deoxy-beta-L-arabinose + (6R)-10-formyltetrahydrofolate = UDP-4-deoxy-4-formamido-beta-L-arabinose + (6S)-5,6,7,8-tetrahydrofolate + H(+). Its pathway is nucleotide-sugar biosynthesis; UDP-4-deoxy-4-formamido-beta-L-arabinose biosynthesis; UDP-4-deoxy-4-formamido-beta-L-arabinose from UDP-alpha-D-glucuronate: step 1/3. It functions in the pathway nucleotide-sugar biosynthesis; UDP-4-deoxy-4-formamido-beta-L-arabinose biosynthesis; UDP-4-deoxy-4-formamido-beta-L-arabinose from UDP-alpha-D-glucuronate: step 3/3. It participates in bacterial outer membrane biogenesis; lipopolysaccharide biosynthesis. Bifunctional enzyme that catalyzes the oxidative decarboxylation of UDP-glucuronic acid (UDP-GlcUA) to UDP-4-keto-arabinose (UDP-Ara4O) and the addition of a formyl group to UDP-4-amino-4-deoxy-L-arabinose (UDP-L-Ara4N) to form UDP-L-4-formamido-arabinose (UDP-L-Ara4FN). The modified arabinose is attached to lipid A and is required for resistance to polymyxin and cationic antimicrobial peptides. This Salmonella paratyphi B (strain ATCC BAA-1250 / SPB7) protein is Bifunctional polymyxin resistance protein ArnA.